The sequence spans 222 residues: GTP cyclohydrolase 1 (222 aa).

Residues Cys-111, His-114, and Cys-182 each coordinate Zn(2+).

The protein belongs to the GTP cyclohydrolase I family. As to quaternary structure, toroid-shaped homodecamer, composed of two pentamers of five dimers.

The enzyme catalyses GTP + H2O = 7,8-dihydroneopterin 3'-triphosphate + formate + H(+). The protein operates within cofactor biosynthesis; 7,8-dihydroneopterin triphosphate biosynthesis; 7,8-dihydroneopterin triphosphate from GTP: step 1/1. The sequence is that of GTP cyclohydrolase 1 from Klebsiella pneumoniae subsp. pneumoniae (strain ATCC 700721 / MGH 78578).